A 2535-amino-acid polypeptide reads, in one-letter code: Piezo-type mechanosensitive ion channel component 1 (2535 aa).

3 consecutive transmembrane segments (helical) span residues 13 to 25 (LLLP…ASLL), 29 to 44 (ALSL…LPWL), and 59 to 81 (LLRA…QICL). Residue Asn100 is glycosylated (N-linked (GlcNAc...) asparagine). The next 5 membrane-spanning stretches (helical) occupy residues 122–138 (VAPD…CLGL), 193–212 (LLVT…AGIA), 215–234 (SAFS…WWSC), 246–266 (LCVM…CYQT), and 308–328 (WPIY…TSLL). Residues 346–357 (DEEHELELDQLE) show a composition bias toward acidic residues. The tract at residues 346–377 (DEEHELELDQLEPEPQARGTTQGATPTTTGPD) is disordered. A compositionally biased stretch (low complexity) spans 358–376 (PEPQARGTTQGATPTTTGP). An N-linked (GlcNAc...) asparagine glycan is attached at Asn380. 8 helical membrane-spanning segments follow: residues 416–436 (LILD…SIMY), 439–454 (WLTF…IWTV), 460–482 (LAML…RYVW), 510–527 (CLDL…WLLL), 572–592 (IYVK…SFAG), 594–614 (LVVY…LFQV), 625–646 (VFWW…TFQF), and 677–693 (LFSS…ACIL). At Ser749 the chain carries Phosphoserine. Transmembrane regions (helical) follow at residues 803–814 (LVALYTVWVALK), 818–831 (VMNL…AFAL), 846–860 (VWTC…LYQL), 913–940 (GYIQ…HYRR), 981–996 (GLEI…IGQR), 999–1014 (FMVI…ILTR), 1028–1043 (CLFL…LLCL), 1083–1104 (TNLI…VFSA), 1140–1166 (YLDM…TGAT), 1172–1190 (GLGY…TTLL), 1204–1222 (LILY…SLLS), and 1272–1288 (IWDS…RRVF). A coiled-coil region spans residues 1325-1356 (HRQTEERSLAQLKRQMKRIRAKQEKYRQSQAS). 2 disordered regions span residues 1345–1383 (AKQE…RTQW) and 1556–1597 (SGPV…NTRS). The span at 1352-1365 (QSQASRGQLQSTDP) shows a compositional bias: polar residues. Residues Ser1372 and Ser1377 each carry the phosphoserine modification. Residues 1579–1597 (SSMTDDTGSPLSTGYNTRS) are compositionally biased toward polar residues. A phosphoserine mark is found at Ser1614, Ser1618, and Ser1633. 4 helical membrane passes run 1644-1687 (PELE…LNHM), 1692-1707 (AASL…WAML), 1716-1734 (FWMT…KYLF), and 1767-1788 (DSYI…SQLL). Composition is skewed to basic and acidic residues over residues 1801-1811 (PKDHCRSSEKD) and 1842-1867 (PKDH…DLKP). The disordered stretch occupies residues 1801 to 1911 (PKDHCRSSEK…GREAAGRKRL (111 aa)). Basic residues predominate over residues 1868 to 1881 (QHRRHISIRFRRRK). 5 consecutive transmembrane segments (helical) span residues 1965–1984 (YALM…FGFW), 2005–2021 (PQAF…TMVI), 2036–2056 (AFQV…LPAV), 2065–2080 (AVAQ…YFAL), and 2181–2201 (GLII…MSLI). A disulfide bond links Cys2425 and Cys2429. A helical transmembrane segment spans residues 2446–2466 (LGFLAGYGIVGLYVSIVLVVG).

The protein belongs to the PIEZO (TC 1.A.75) family. Homotrimer; the homotrimer forms a propeller-shaped Piezo channel with a cation-ion conducting pore. Heterotrimeric interaction may occur between PIEZO1 and PIEZO2. Interacts with PKD2. Interacts with STOM13. Interacts with TMC1, TMC2, PCDH15 and CIB2; the interaction may be part of the MET complex. Interacts with MDFIC (via C-terminus); the interaction prolongs Piezo channel inactivation. Interacts with MDFI (via C-terminus); the interaction prolongs Piezo channel inactivation. In terms of tissue distribution, moderate expression in lung and kidney. Very weak expression in heart, spleen and liver.

It localises to the endoplasmic reticulum membrane. The protein localises to the endoplasmic reticulum-Golgi intermediate compartment membrane. It is found in the cell membrane. The protein resides in the cell projection. Its subcellular location is the lamellipodium membrane. The enzyme catalyses K(+)(in) = K(+)(out). It catalyses the reaction Na(+)(in) = Na(+)(out). The catalysed reaction is Ca(2+)(in) = Ca(2+)(out). It carries out the reaction Mg(2+)(in) = Mg(2+)(out). Regulated by auxillary subunits MDFIC and MDFI. Down-regulated by phosphatidylserines exposed on the cell surface. Divalent ions decrease the single-channel permeability of K(+). In terms of biological role, pore-forming subunit of the mechanosensitive non-specific cation Piezo channel required for rapidly adapting mechanically activated (MA) currents and has a key role in sensing touch and tactile pain. Piezo channels are homotrimeric three-blade propeller-shaped structures that utilize a cap-motion and plug-and-latch mechanism to gate their ion-conducting pathways. Generates currents characterized by a linear current-voltage relationship that are sensitive to ruthenium red and gadolinium. Conductance to monovalent alkali ions is highest for K(+), intermediate for Na(+) and lowest for Li(+). Divalent ions except for Mn(2+) permeate the channel but more slowly than the monovalent ions and they also reduce K(+) currents. Plays a key role in epithelial cell adhesion by maintaining integrin activation through R-Ras recruitment to the ER, most probably in its activated state, and subsequent stimulation of calpain signaling. In inner ear hair cells, PIEZO1/2 subunits may constitute part of the mechanotransducer (MET) non-selective cation channel complex where they may act as pore-forming ion-conducting component in the complex. In the kidney, may contribute to the detection of intraluminal pressure changes and to urine flow sensing. Acts as a shear-stress sensor that promotes endothelial cell organization and alignment in the direction of blood flow through calpain activation. Plays a key role in blood vessel formation and vascular structure in both development and adult physiology. Acts as a sensor of phosphatidylserine (PS) flipping at the plasma membrane and governs morphogenesis of muscle cells. In myoblasts, flippase-mediated PS enrichment at the inner leaflet of plasma membrane triggers channel activation and Ca(2+) influx followed by Rho GTPases signal transduction, leading to assembly of cortical actomyosin fibers and myotube formation. This Rattus norvegicus (Rat) protein is Piezo-type mechanosensitive ion channel component 1 (Piezo1).